The chain runs to 503 residues: Arabinose import ATP-binding protein AraG (503 aa).

2 ABC transporter domains span residues Leu-5–Arg-240 and Leu-253–Gly-497. Gly-37–Ser-44 contributes to the ATP binding site.

Belongs to the ABC transporter superfamily. Arabinose importer (TC 3.A.1.2.2) family. As to quaternary structure, the complex is composed of two ATP-binding proteins (AraG), two transmembrane proteins (AraH) and a solute-binding protein (AraF).

Its subcellular location is the cell inner membrane. The enzyme catalyses L-arabinose(out) + ATP + H2O = L-arabinose(in) + ADP + phosphate + H(+). Functionally, part of the ABC transporter complex AraFGH involved in arabinose import. Responsible for energy coupling to the transport system. The sequence is that of Arabinose import ATP-binding protein AraG from Burkholderia pseudomallei (strain K96243).